The chain runs to 281 residues: MQQDLLHRYLFDNLDVRGELVQIENAYNEMIANHNYPDAVKALLGELLVATCLLTATLKFEGEIAVQLQGDGPVKYAVINGDDKQNMRGIARLQSEVTGSTVKELIGQGYMVITITPTKGERYQGIVPLEHETLSECIEAYFEQSEQLKTRLWFATDTTEGNAKACGLFLQVLPVDKQKSIEDFAHLEALSHTIKDEELLELDANTVLTRLYHEDNPRVFEPQSIQFKCGCTREKTMTALVNIGQQALLDDVAEHGEIKISCHYCLKDYLFDEQDVKNIFN.

2 cysteine pairs are disulfide-bonded: Cys229-Cys231 and Cys262-Cys265.

This sequence belongs to the HSP33 family. In terms of processing, under oxidizing conditions two disulfide bonds are formed involving the reactive cysteines. Under reducing conditions zinc is bound to the reactive cysteines and the protein is inactive.

It is found in the cytoplasm. Functionally, redox regulated molecular chaperone. Protects both thermally unfolding and oxidatively damaged proteins from irreversible aggregation. Plays an important role in the bacterial defense system toward oxidative stress. The polypeptide is 33 kDa chaperonin (Pseudoalteromonas translucida (strain TAC 125)).